The sequence spans 393 residues: MQNNPYSWIESSLSTIHKANWYRSVKTIESIPGAIIKLEGKKLINFASNDYLGLAGDERLIAAAIQATKEFGSGSTGSRLLTGHREIHQELEREIAKLKQTESALVFSSGYLANIGVISSVVSQRDLILSDEYNHSSLKNGAILSGAKIIEYSHNNIEYLKNKLEQKRENYRRSLIITDSVFSMDGDLCKLPLLLDLAEKYNSMLLVDEAHATGVFGINGGGCVEHFNCTGKQLIQIGTLSKALGSLGGYVAGSKNLIEFLRNRTPTWIYTTGLTPADTAAALTAIKIIKKEPERRMKLWQNLEIFINLLETESQLLHKGKKTSNYESPIICFPLKNAVEALKVGEKLKQEGIFAPAIRPPTVNTSRIRISLMSTHETSHLQQLIAALINLSQ.

A substrate-binding site is contributed by Arg23. 110–111 (GY) provides a ligand contact to pyridoxal 5'-phosphate. His135 contributes to the substrate binding site. Residues Ser183, 208–211 (DEAH), and 239–242 (TLSK) contribute to the pyridoxal 5'-phosphate site. N6-(pyridoxal phosphate)lysine is present on Lys242. Position 362 (Thr362) interacts with substrate.

Belongs to the class-II pyridoxal-phosphate-dependent aminotransferase family. BioF subfamily. As to quaternary structure, homodimer. It depends on pyridoxal 5'-phosphate as a cofactor.

The enzyme catalyses 6-carboxyhexanoyl-[ACP] + L-alanine + H(+) = (8S)-8-amino-7-oxononanoate + holo-[ACP] + CO2. It functions in the pathway cofactor biosynthesis; biotin biosynthesis. In terms of biological role, catalyzes the decarboxylative condensation of pimeloyl-[acyl-carrier protein] and L-alanine to produce 8-amino-7-oxononanoate (AON), [acyl-carrier protein], and carbon dioxide. The sequence is that of Putative 8-amino-7-oxononanoate synthase (bioF) from Trichodesmium erythraeum (strain IMS101).